The primary structure comprises 357 residues: Protein pelota homolog (357 aa).

Belongs to the eukaryotic release factor 1 family. Pelota subfamily. Monomer. The cofactor is a divalent metal cation.

Its subcellular location is the cytoplasm. Its function is as follows. May function in recognizing stalled ribosomes, interact with stem-loop structures in stalled mRNA molecules, and effect endonucleolytic cleavage of the mRNA. May play a role in the release non-functional ribosomes and degradation of damaged mRNAs. Has endoribonuclease activity. This chain is Protein pelota homolog, found in Thermococcus kodakarensis (strain ATCC BAA-918 / JCM 12380 / KOD1) (Pyrococcus kodakaraensis (strain KOD1)).